The chain runs to 674 residues: DNA ligase (674 aa).

NAD(+) is bound by residues 34–38 (DSEYD), 83–84 (SL), and E114. The active-site N6-AMP-lysine intermediate is the K116. NAD(+) contacts are provided by R137, E174, K290, and K314. The Zn(2+) site is built by C405, C408, C424, and C429. Positions 587-674 (QSGTQFDGKM…KLSLIENTKF (88 aa)) constitute a BRCT domain.

It belongs to the NAD-dependent DNA ligase family. LigA subfamily. Requires Mg(2+) as cofactor. Mn(2+) serves as cofactor.

The enzyme catalyses NAD(+) + (deoxyribonucleotide)n-3'-hydroxyl + 5'-phospho-(deoxyribonucleotide)m = (deoxyribonucleotide)n+m + AMP + beta-nicotinamide D-nucleotide.. Functionally, DNA ligase that catalyzes the formation of phosphodiester linkages between 5'-phosphoryl and 3'-hydroxyl groups in double-stranded DNA using NAD as a coenzyme and as the energy source for the reaction. It is essential for DNA replication and repair of damaged DNA. The polypeptide is DNA ligase (Endomicrobium trichonymphae).